We begin with the raw amino-acid sequence, 269 residues long: uncharacterized protein (269 aa).

Residues 52 to 262 are a coiled coil; sequence KNVYEQLVAT…RKILVESINK (211 aa).

This is an uncharacterized protein from Caenorhabditis elegans.